We begin with the raw amino-acid sequence, 662 residues long: UvrABC system protein B (662 aa).

Residues 25 to 182 (KGIEKREKFQ…KKLVEIQYER (158 aa)) enclose the Helicase ATP-binding domain. ATP is bound at residue 38–45 (GVTGSGKT). Residues 91 to 114 (YYDYYQPEAYVAQSDTYIEKDASI) carry the Beta-hairpin motif. One can recognise a Helicase C-terminal domain in the interval 429–595 (QIDDLYTSIQ…TIIKDIREVI (167 aa)). The 36-residue stretch at 622 to 657 (DKLIEKYEEEMKEAAQNLQFEKAAHLRDVIYKLKKD) folds into the UVR domain.

This sequence belongs to the UvrB family. Forms a heterotetramer with UvrA during the search for lesions. Interacts with UvrC in an incision complex.

It localises to the cytoplasm. Its function is as follows. The UvrABC repair system catalyzes the recognition and processing of DNA lesions. A damage recognition complex composed of 2 UvrA and 2 UvrB subunits scans DNA for abnormalities. Upon binding of the UvrA(2)B(2) complex to a putative damaged site, the DNA wraps around one UvrB monomer. DNA wrap is dependent on ATP binding by UvrB and probably causes local melting of the DNA helix, facilitating insertion of UvrB beta-hairpin between the DNA strands. Then UvrB probes one DNA strand for the presence of a lesion. If a lesion is found the UvrA subunits dissociate and the UvrB-DNA preincision complex is formed. This complex is subsequently bound by UvrC and the second UvrB is released. If no lesion is found, the DNA wraps around the other UvrB subunit that will check the other stand for damage. The chain is UvrABC system protein B from Clostridium botulinum (strain Langeland / NCTC 10281 / Type F).